The following is a 465-amino-acid chain: Hexokinase-4 (465 aa).

One can recognise a Hexokinase domain in the interval 10-454 (ATKKEKVEQI…SGRGAALVSA (445 aa)). The tract at residues 67 to 203 (EGSEVGDFLS…DFEMDVVAMV (137 aa)) is hexokinase small subdomain. 78–83 (DLGGTN) contributes to the ATP binding site. Substrate is bound by residues 151–152 (SF), 168–169 (TK), and 204–205 (ND). The tract at residues 204–443 (NDTVATMISC…CEITFIESEE (240 aa)) is hexokinase large subdomain. Thr-228 is an ATP binding site. Positions 231, 256, and 290 each coordinate substrate. ATP is bound by residues 295–296 (GK), 332–336 (TRFVS), and 411–415 (SVYKL).

The protein belongs to the hexokinase family. As to quaternary structure, monomer. Interacts with MIDN; the interaction occurs preferentially at low glucose levels and results in inhibition of hexokinase activity. Interacts with GCKR; leading to sequestration in the nucleus.

The protein resides in the cytoplasm. The protein localises to the nucleus. It localises to the mitochondrion. The catalysed reaction is a D-hexose + ATP = a D-hexose 6-phosphate + ADP + H(+). It catalyses the reaction D-fructose + ATP = D-fructose 6-phosphate + ADP + H(+). It carries out the reaction D-glucose + ATP = D-glucose 6-phosphate + ADP + H(+). The enzyme catalyses D-mannose + ATP = D-mannose 6-phosphate + ADP + H(+). It participates in carbohydrate metabolism; hexose metabolism. The protein operates within carbohydrate degradation; glycolysis; D-glyceraldehyde 3-phosphate and glycerone phosphate from D-glucose: step 1/4. Its activity is regulated as follows. Subject to allosteric regulation. Low glucose and high fructose-6-phosphate triggers association with the inhibitor GCKR followed by sequestration in the nucleus. Functionally, catalyzes the phosphorylation of hexose, such as D-glucose, D-fructose and D-mannose, to hexose 6-phosphate (D-glucose 6-phosphate, D-fructose 6-phosphate and D-mannose 6-phosphate, respectively). Compared to other hexokinases, has a weak affinity for D-glucose, and is effective only when glucose is abundant. Mainly expressed in pancreatic beta cells and the liver and constitutes a rate-limiting step in glucose metabolism in these tissues. Since insulin secretion parallels glucose metabolism and the low glucose affinity of GCK ensures that it can change its enzymatic activity within the physiological range of glucose concentrations, GCK acts as a glucose sensor in the pancreatic beta cell. In pancreas, plays an important role in modulating insulin secretion. In liver, helps to facilitate the uptake and conversion of glucose by acting as an insulin-sensitive determinant of hepatic glucose usage. Required to provide D-glucose 6-phosphate for the synthesis of glycogen. Mediates the initial step of glycolysis by catalyzing phosphorylation of D-glucose to D-glucose 6-phosphate. The sequence is that of Hexokinase-4 from Mus musculus (Mouse).